The primary structure comprises 354 residues: DNA polymerase IV 2 (354 aa).

The UmuC domain occupies 4 to 184; the sequence is IIHIDMDAFY…LPVKKFHGVG (181 aa). Positions 8 and 102 each coordinate Mg(2+). Glu103 is a catalytic residue.

This sequence belongs to the DNA polymerase type-Y family. As to quaternary structure, monomer. It depends on Mg(2+) as a cofactor.

It is found in the cytoplasm. It carries out the reaction DNA(n) + a 2'-deoxyribonucleoside 5'-triphosphate = DNA(n+1) + diphosphate. Its function is as follows. Poorly processive, error-prone DNA polymerase involved in untargeted mutagenesis. Copies undamaged DNA at stalled replication forks, which arise in vivo from mismatched or misaligned primer ends. These misaligned primers can be extended by PolIV. Exhibits no 3'-5' exonuclease (proofreading) activity. May be involved in translesional synthesis, in conjunction with the beta clamp from PolIII. This Rhizobium meliloti (strain 1021) (Ensifer meliloti) protein is DNA polymerase IV 2 (dinB2).